The sequence spans 180 residues: Major urinary protein 5 (180 aa).

A signal peptide spans 1-18 (MKLLLLLCLELTLVYVHA). Cysteines 82 and 175 form a disulfide.

Belongs to the calycin superfamily. Lipocalin family.

It is found in the secreted. Functionally, major urinary proteins (Mups) bind pheromones, and thus stabilize them to allow slow release into the air from urine marks. May protect pheromones from oxidation. May also act as pheromones themselves. In this context, they play a role in the regulation of social behaviors, such as aggression, mating, pup-suckling, territory establishment and dominance. This Mus musculus (Mouse) protein is Major urinary protein 5.